We begin with the raw amino-acid sequence, 195 residues long: 4'-phosphopantetheinyl transferase AcpT (195 aa).

The protein belongs to the P-Pant transferase superfamily. Gsp/Sfp/HetI/AcpT family.

It carries out the reaction apo-[ACP] + CoA = holo-[ACP] + adenosine 3',5'-bisphosphate + H(+). Its function is as follows. May be involved in an alternative pathway for phosphopantetheinyl transfer and holo-ACP synthesis in E.coli. The native apo-protein substrate is unknown. Is able to functionally replace AcpS in vivo but only when expressed at high levels. This is 4'-phosphopantetheinyl transferase AcpT (acpT) from Escherichia coli O157:H7.